The sequence spans 130 residues: DNA-directed RNA polymerase subunit omega (130 aa).

2 disordered regions span residues 79 to 98 and 108 to 130; these read EPESDTVPLIGSAGASVDAD and TEEELLKGLEGLAPPEEQPEEDE.

It belongs to the RNA polymerase subunit omega family. In terms of assembly, the RNAP catalytic core consists of 2 alpha, 1 beta, 1 beta' and 1 omega subunit. When a sigma factor is associated with the core the holoenzyme is formed, which can initiate transcription.

It catalyses the reaction RNA(n) + a ribonucleoside 5'-triphosphate = RNA(n+1) + diphosphate. Functionally, promotes RNA polymerase assembly. Latches the N- and C-terminal regions of the beta' subunit thereby facilitating its interaction with the beta and alpha subunits. This chain is DNA-directed RNA polymerase subunit omega, found in Nitrobacter winogradskyi (strain ATCC 25391 / DSM 10237 / CIP 104748 / NCIMB 11846 / Nb-255).